We begin with the raw amino-acid sequence, 556 residues long: Serine/threonine-protein kinase PksC (556 aa).

Residues 20 to 287 (YQLRDLLGEG…SAEAMRDECL (268 aa)) form the Protein kinase domain. Residues 26–34 (LGEGGMASV) and Lys49 contribute to the ATP site. Catalysis depends on Asp151, which acts as the Proton acceptor. Disordered regions lie at residues 300–403 (IVPG…PGGK) and 435–485 (EDPE…DPDK). Residues 336–348 (QPTPSPGPNPYGT) are compositionally biased toward pro residues. 2 stretches are compositionally biased toward low complexity: residues 360-381 (YPQQ…QAAA) and 445-458 (STAS…KAAG). Over residues 461-475 (GPDKEKTIEKDKCTE) the composition is skewed to basic and acidic residues. The PASTA domain occupies 482–550 (DPDKIQVPDF…MPEIQLKVST (69 aa)).

It belongs to the protein kinase superfamily. Ser/Thr protein kinase family.

It carries out the reaction L-seryl-[protein] + ATP = O-phospho-L-seryl-[protein] + ADP + H(+). The catalysed reaction is L-threonyl-[protein] + ATP = O-phospho-L-threonyl-[protein] + ADP + H(+). In Streptomyces coelicolor (strain ATCC BAA-471 / A3(2) / M145), this protein is Serine/threonine-protein kinase PksC (pksC).